A 523-amino-acid polypeptide reads, in one-letter code: Synaptotagmin-10 (523 aa).

Residues 1-55 lie on the Vesicular side of the membrane; that stretch reads MSFHKEDGVNSLCQKALHIVTELCFAGQVEWEKCSGIFPRDRGSQGGSSTDISVS. The cysteine motif stretch occupies residues 13–35; the sequence is CQKALHIVTELCFAGQVEWEKCS. The helical transmembrane segment at 56-76 threads the bilayer; sequence LLAVVVSFCGLALLVVSLFVF. Over 77–523 the chain is Cytoplasmic; that stretch reads WKLCWPCWKS…CPSPKPPSTP (447 aa). T136 bears the Phosphothreonine mark. C2 domains are found at residues 231–352 and 363–496; these read ICGK…TVWK and DLGE…THWH. Residues D262, D268, D320, F321, D322, S325, D328, D394, D400, D454, and D456 each contribute to the Ca(2+) site.

This sequence belongs to the synaptotagmin family. In terms of assembly, homodimer; disulfide-linked via the cysteine motif. Can also form heterodimers with SYT3, SYT6, SYT7 and SYT9. Ca(2+) serves as cofactor. In terms of tissue distribution, expressed only in pancreas, lung and kidney.

The protein resides in the cytoplasmic vesicle. It localises to the secretory vesicle membrane. In terms of biological role, ca(2+) sensor specifically required for the Ca(2+)-dependent exocytosis of secretory vesicles containing IGF1 in neurons of the olfactory bulb. Exocytosis of IGF1 is required for sensory perception of smell. Not involved in Ca(2+)-dependent synaptic vesicle exocytosis. Acts through Ca(2+) and phospholipid binding to the C2 domain: Ca(2+) induces binding of the C2-domains to phospholipid membranes and to assembled SNARE-complexes; both actions contribute to triggering exocytosis. The protein is Synaptotagmin-10 (SYT10) of Homo sapiens (Human).